Consider the following 222-residue polypeptide: Charged multivesicular body protein 4b (222 aa).

2 disordered regions span residues 1–21 (MSLIGKLFGTGGKGAKGPSPQ) and 183–222 (GPETVPLPNVPAAVLPAKPVKKKQEEDDDDMRELENWATA). The stretch at 21-182 (QEAIQKLRDT…ELDKNLLEVQ (162 aa)) forms a coiled coil. Over residues 188–200 (PLPNVPAAVLPAK) the composition is skewed to low complexity.

The protein belongs to the SNF7 family. As to quaternary structure, probable core component of the endosomal sorting required for transport complex III (ESCRT-III). ESCRT-III components are thought to multimerize to form a flat lattice on the perimeter membrane of the endosome.

The protein resides in the cytoplasm. It is found in the cytosol. The protein localises to the late endosome membrane. Its subcellular location is the midbody. In terms of biological role, probable core component of the endosomal sorting required for transport complex III (ESCRT-III) which is involved in multivesicular bodies (MVBs) formation and sorting of endosomal cargo proteins into MVBs. MVBs contain intraluminal vesicles (ILVs) that are generated by invagination and scission from the limiting membrane of the endosome and mostly are delivered to lysosomes enabling degradation of membrane proteins, such as stimulated growth factor receptors, lysosomal enzymes and lipids. The sequence is that of Charged multivesicular body protein 4b (chmp4b) from Xenopus tropicalis (Western clawed frog).